The primary structure comprises 368 residues: Alanine racemase (368 aa).

The active-site Proton acceptor; specific for D-alanine is the Lys40. Lys40 carries the N6-(pyridoxal phosphate)lysine modification. Residue Arg134 participates in substrate binding. Residue Tyr263 is the Proton acceptor; specific for L-alanine of the active site. Met310 serves as a coordination point for substrate.

The protein belongs to the alanine racemase family. Pyridoxal 5'-phosphate serves as cofactor.

It catalyses the reaction L-alanine = D-alanine. It participates in amino-acid biosynthesis; D-alanine biosynthesis; D-alanine from L-alanine: step 1/1. In terms of biological role, catalyzes the interconversion of L-alanine and D-alanine. May also act on other amino acids. The chain is Alanine racemase (alr) from Listeria monocytogenes serotype 4b (strain CLIP80459).